The primary structure comprises 412 residues: [Pyruvate dehydrogenase (acetyl-transferring)] kinase isozyme 4, mitochondrial (412 aa).

The 231-residue stretch at 138–368 folds into the Histidine kinase domain; it reads ILEYKDTCTV…DAIIYLKALS (231 aa). Residues 254 to 261, D293, 312 to 313, and 329 to 334 each bind ATP; these read ELFKNAMR, ST, and GFGYGL.

It belongs to the PDK/BCKDK protein kinase family. In terms of assembly, homodimer. Interacts with the pyruvate dehydrogenase complex subunit DLAT, and is part of the multimeric pyruvate dehydrogenase complex that contains multiple copies of pyruvate dehydrogenase (E1), dihydrolipoamide acetyltransferase (DLAT, E2) and lipoamide dehydrogenase (DLD, E3).

Its subcellular location is the mitochondrion matrix. The catalysed reaction is L-seryl-[pyruvate dehydrogenase E1 alpha subunit] + ATP = O-phospho-L-seryl-[pyruvate dehydrogenase E1 alpha subunit] + ADP + H(+). Functionally, kinase that plays a key role in regulation of glucose and fatty acid metabolism and homeostasis via phosphorylation of the pyruvate dehydrogenase subunits PDHA1 and PDHA2. This inhibits pyruvate dehydrogenase activity, and thereby regulates metabolite flux through the tricarboxylic acid cycle, down-regulates aerobic respiration and inhibits the formation of acetyl-coenzyme A from pyruvate. Inhibition of pyruvate dehydrogenase decreases glucose utilization and increases fat metabolism in response to prolonged fasting and starvation. Plays an important role in maintaining normal blood glucose levels under starvation, and is involved in the insulin signaling cascade. Via its regulation of pyruvate dehydrogenase activity, plays an important role in maintaining normal blood pH and in preventing the accumulation of ketone bodies under starvation. In the fed state, mediates cellular responses to glucose levels and to a high-fat diet. Regulates both fatty acid oxidation and de novo fatty acid biosynthesis. Plays a role in the generation of reactive oxygen species. Protects detached epithelial cells against anoikis. Plays a role in cell proliferation via its role in regulating carbohydrate and fatty acid metabolism. The protein is [Pyruvate dehydrogenase (acetyl-transferring)] kinase isozyme 4, mitochondrial (Pdk4) of Mus musculus (Mouse).